We begin with the raw amino-acid sequence, 434 residues long: Methylenetetrahydrofolate--tRNA-(uracil-5-)-methyltransferase TrmFO (434 aa).

Position 10–15 (10–15 (GAGLAG)) interacts with FAD.

Belongs to the MnmG family. TrmFO subfamily. FAD is required as a cofactor.

The protein localises to the cytoplasm. The enzyme catalyses uridine(54) in tRNA + (6R)-5,10-methylene-5,6,7,8-tetrahydrofolate + NADH + H(+) = 5-methyluridine(54) in tRNA + (6S)-5,6,7,8-tetrahydrofolate + NAD(+). It catalyses the reaction uridine(54) in tRNA + (6R)-5,10-methylene-5,6,7,8-tetrahydrofolate + NADPH + H(+) = 5-methyluridine(54) in tRNA + (6S)-5,6,7,8-tetrahydrofolate + NADP(+). In terms of biological role, catalyzes the folate-dependent formation of 5-methyl-uridine at position 54 (M-5-U54) in all tRNAs. This Bacillus cereus (strain G9842) protein is Methylenetetrahydrofolate--tRNA-(uracil-5-)-methyltransferase TrmFO.